The chain runs to 113 residues: MMQKKKLQPPLLVTIAALVLCLPLLLTGCGNSKNAPVPSVVILPEIDTELTEATPVPPMPQPLTWGASLLWNADLLMALGQCNRDKASVREQEIRRKEIYERRPEPGGGAAAR.

The first 28 residues, 1-28, serve as a signal peptide directing secretion; that stretch reads MMQKKKLQPPLLVTIAALVLCLPLLLTG. Cys-29 carries the N-palmitoyl cysteine; by host lipid modification. The S-diacylglycerol cysteine; by host moiety is linked to residue Cys-29. Basic and acidic residues predominate over residues 91–105; the sequence is EQEIRRKEIYERRPE. Residues 91 to 113 are disordered; sequence EQEIRRKEIYERRPEPGGGAAAR.

Interacts with the spanin inner membrane subunit. Part of the spanin complex which spans the entire periplasmic space. The spanin complex is composed of spanin inner membrane subunit and spanin outer membrane subunit.

It localises to the host cell outer membrane. In terms of biological role, component of the spanin complex that disrupts the host outer membrane and participates in cell lysis during virus exit. The spanin complex conducts the final step in host lysis by disrupting the outer membrane after holin and endolysin action have permeabilized the inner membrane and degraded the host peptidoglycans. Host outer membrane disruption is possibly due to local fusion between the inner and outer membrane performed by the spanin complex. In Enterobacteriaceae (Bacteriophage Mu), this protein is Spanin, outer lipoprotein subunit.